Reading from the N-terminus, the 686-residue chain is Potassium-transporting ATPase ATP-binding subunit 2 (686 aa).

The next 4 helical transmembrane spans lie at 37–57 (MFVV…PNLF), 64–84 (MILY…FANF), 223–243 (LLVS…PMAI), and 255–275 (VALT…AIGI). The 4-aspartylphosphate intermediate role is filled by Asp306. ATP contacts are provided by residues Asp343, Glu347, 376-383 (FTAQTRMS), and Lys395. Asp518 and Asp522 together coordinate Mg(2+). 3 helical membrane passes run 588–608 (FAII…LNIM), 616–636 (AILS…PLAM), and 656–676 (VYGV…DLVI).

This sequence belongs to the cation transport ATPase (P-type) (TC 3.A.3) family. Type IA subfamily. As to quaternary structure, the system is composed of three essential subunits: KdpA, KdpB and KdpC.

The protein resides in the cell membrane. It catalyses the reaction K(+)(out) + ATP + H2O = K(+)(in) + ADP + phosphate + H(+). Its function is as follows. Part of the high-affinity ATP-driven potassium transport (or Kdp) system, which catalyzes the hydrolysis of ATP coupled with the electrogenic transport of potassium into the cytoplasm. This subunit is responsible for energy coupling to the transport system and for the release of the potassium ions to the cytoplasm. The polypeptide is Potassium-transporting ATPase ATP-binding subunit 2 (Listeria innocua serovar 6a (strain ATCC BAA-680 / CLIP 11262)).